The following is a 288-amino-acid chain: MATATLDKAALSRLFTDYSLEITPKDVEALENAAHMIPPGTLISVTFLPGAEYEDRARAAKRIQELGFRPVPHLSARRLIDEADLRTYLDMLKGVIDLKHVFVIAGDPNEPLGIYEDALALIDSGILKEYGIEHCGISGYPEGHPDITDEKLAKAMHDKVASLKRQGIDYSIMTQFGFDAEPVLEWLKQIRSEGIDGPVRIGLAGPASIKTLLRFAARCGVGTSAKVVKKYGLSITSLIGSAGPDPVIEDLTPVLGPEHGQVHLHFYPFGGLVKTNEWIVNFKGKQGI.

Residues Ala-51, His-73, Gly-106, Asp-107, Ala-118, Tyr-140, His-144, and Lys-159 each coordinate FAD. Position 107 (Asp-107) interacts with (6S)-5-methyl-5,6,7,8-tetrahydrofolate. Gln-175 contributes to the (6S)-5-methyl-5,6,7,8-tetrahydrofolate binding site. Gln-175 lines the NADH pocket.

It belongs to the methylenetetrahydrofolate reductase family. FAD is required as a cofactor.

The enzyme catalyses (6S)-5-methyl-5,6,7,8-tetrahydrofolate + NAD(+) = (6R)-5,10-methylene-5,6,7,8-tetrahydrofolate + NADH + H(+). It functions in the pathway one-carbon metabolism; tetrahydrofolate interconversion. The protein operates within amino-acid biosynthesis; L-methionine biosynthesis via de novo pathway. In terms of biological role, catalyzes the NADH-dependent reduction of 5,10-methylenetetrahydrofolate to 5-methyltetrahydrofolate. Is required to provide the methyl group necessary for methionine synthetase to convert homocysteine to methionine; the methyl group is given by 5-methyltetrahydrofolate. Is required for Sphingobium SYK-6 to grow on vanillate or syringate as the sole source of carbon. This is 5,10-methylenetetrahydrofolate reductase from Sphingobium sp. (strain NBRC 103272 / SYK-6).